A 187-amino-acid chain; its full sequence is Large ribosomal subunit protein uL24c (187 aa).

Residues 1-41 (MAALQSSFAGLSTSFFGQRFSPPLSLPPLVKSTEGPCLIQA) constitute a chloroplast transit peptide.

Belongs to the universal ribosomal protein uL24 family. In terms of assembly, part of the 50S ribosomal subunit.

Its subcellular location is the plastid. The protein resides in the chloroplast. One of two assembly initiator proteins, it binds directly to the 5'-end of the 23S rRNA, where it nucleates assembly of the 50S subunit. The protein is Large ribosomal subunit protein uL24c (RPL24) of Nicotiana tabacum (Common tobacco).